The primary structure comprises 438 residues: DNA primase DnaG (438 aa).

Positions 171–245 (DAILVVEGRA…DIDYVARAPE (75 aa)) constitute a Toprim domain. Mg(2+)-binding residues include E177, D219, and D221.

This sequence belongs to the archaeal DnaG primase family. As to quaternary structure, forms a ternary complex with MCM helicase and DNA. Component of the archaeal exosome complex. Mg(2+) serves as cofactor.

The enzyme catalyses ssDNA + n NTP = ssDNA/pppN(pN)n-1 hybrid + (n-1) diphosphate.. In terms of biological role, RNA polymerase that catalyzes the synthesis of short RNA molecules used as primers for DNA polymerase during DNA replication. Also part of the exosome, which is a complex involved in RNA degradation. Acts as a poly(A)-binding protein that enhances the interaction between heteromeric, adenine-rich transcripts and the exosome. The polypeptide is DNA primase DnaG (Methanothrix thermoacetophila (strain DSM 6194 / JCM 14653 / NBRC 101360 / PT) (Methanosaeta thermophila)).